Reading from the N-terminus, the 265-residue chain is Mlc titration factor A (265 aa).

Histidine 111, histidine 148, histidine 152, and glutamate 211 together coordinate Zn(2+).

The protein belongs to the MtfA family. In terms of assembly, monomer in solution. Interacts with Mlc. Requires Zn(2+) as cofactor.

It localises to the cytoplasm. Association between Mlc and MtfA may induce structural changes that activate the peptidase activity of MtfA while inactivating the DNA-binding ability of Mlc. The aminopeptidase activity is partially inhibited by metal chelators such as EDTA and phenantroline, but not by inhibitors for serine-, aspartyl-, or cysteine-proteases. Functionally, involved in the modulation of the activity of the glucose-phosphotransferase system (glucose-PTS). Interacts with the transcriptional repressor Mlc, preventing its interaction with DNA and leading to the modulation of expression of genes regulated by Mlc, including ptsG, which encodes the PTS system glucose-specific EIICB component. In terms of biological role, shows zinc-dependent metallopeptidase activity. In vitro, can cleave several artificial substrates. The highest activity is observed for L-alanine fused to 4-nitroanilide (L-alanine-pNA). Shows lower activity towards proline-pNA and valine-pNA. This Klebsiella pneumoniae subsp. pneumoniae (strain ATCC 700721 / MGH 78578) protein is Mlc titration factor A.